Consider the following 58-residue polypeptide: uncharacterized protein (58 aa).

The protein localises to the plastid. Its subcellular location is the chloroplast. This is an uncharacterized protein from Pyropia yezoensis (Susabi-nori).